The primary structure comprises 736 residues: 1,4-alpha-glucan branching enzyme GlgB 2 (736 aa).

The active-site Nucleophile is the Asp-415. The active-site Proton donor is the Glu-468.

This sequence belongs to the glycosyl hydrolase 13 family. GlgB subfamily. As to quaternary structure, monomer.

The enzyme catalyses Transfers a segment of a (1-&gt;4)-alpha-D-glucan chain to a primary hydroxy group in a similar glucan chain.. It participates in glycan biosynthesis; glycogen biosynthesis. In terms of biological role, catalyzes the formation of the alpha-1,6-glucosidic linkages in glycogen by scission of a 1,4-alpha-linked oligosaccharide from growing alpha-1,4-glucan chains and the subsequent attachment of the oligosaccharide to the alpha-1,6 position. The polypeptide is 1,4-alpha-glucan branching enzyme GlgB 2 (Rhizobium johnstonii (strain DSM 114642 / LMG 32736 / 3841) (Rhizobium leguminosarum bv. viciae)).